A 657-amino-acid chain; its full sequence is uncharacterized protein (657 aa).

Active-site charge relay system residues include Ser-518 and His-631.

This sequence belongs to the peptidase S9C family.

This is an uncharacterized protein from Bacillus subtilis (strain 168).